A 167-amino-acid polypeptide reads, in one-letter code: Homeobox protein EgHBX3 (167 aa).

Positions 80-139 (SQSKRRVLFNKFQISQLEKRLKQRYLTAQERQELAHTIGLTPTQVKIWFQNHAYKMKRLF) form a DNA-binding region, homeobox.

Belongs to the NK-2 homeobox family.

Its subcellular location is the nucleus. The protein is Homeobox protein EgHBX3 (HBX3) of Echinococcus granulosus (Hydatid tapeworm).